The following is a 440-amino-acid chain: Probable D-serine dehydratase (440 aa).

Lys-120 is modified (N6-(pyridoxal phosphate)lysine).

It belongs to the serine/threonine dehydratase family. DsdA subfamily. Pyridoxal 5'-phosphate serves as cofactor.

It catalyses the reaction D-serine = pyruvate + NH4(+). The protein is Probable D-serine dehydratase of Shouchella clausii (strain KSM-K16) (Alkalihalobacillus clausii).